The following is a 727-amino-acid chain: Iron-sulfur clusters transporter ATM1, mitochondrial (727 aa).

A mitochondrion-targeting transit peptide spans 1-25; that stretch reads MLIGGAQNRLYQLRTSNILGLLRTR. Residues 26–138 lie on the Mitochondrial matrix side of the membrane; the sequence is SALRVGSKVE…PRGNTKVKVR (113 aa). A disordered region spans residues 87-107; that stretch reads KSKLPNEDTAHNASEKNSKKT. Positions 90–107 are enriched in basic and acidic residues; sequence LPNEDTAHNASEKNSKKT. Residues 139-160 traverse the membrane as a helical segment; sequence VLLALALLIGAKVLNVQVPFFF. The ABC transmembrane type-1 domain maps to 139 to 429; sequence VLLALALLIG…LGSVYRELKQ (291 aa). Over 161–183 the chain is Mitochondrial intermembrane; that stretch reads KQIIDGMNVDWSDATVALPAALG. A helical membrane pass occupies residues 184–207; the sequence is LTIMCYGLARFGAVLFGELRNAIF. The Mitochondrial matrix segment spans residues 208–256; sequence ARVAQNAIRNVSLQTFEHLMKLDLGWHLSRQTGGLTRAMDRGTKGISYV. A helical transmembrane segment spans residues 257 to 280; it reads LSAMVFHIIPITFEISVVCGILTY. Position 281 (Gln281) is a topological domain, mitochondrial intermembrane. A helical transmembrane segment spans residues 282 to 302; that stretch reads FGASFAGITFTTMLLYSIFTI. The Mitochondrial matrix portion of the chain corresponds to 303–368; the sequence is RTTAWRTRFR…SQVKVAQSLA (66 aa). Glutathione is bound by residues 308–312 and 371–374; these read RTRFR and NSGQ. A helical transmembrane segment spans residues 369–387; the sequence is FLNSGQSLIFTTALTGMMY. Residues 388 to 402 are Mitochondrial intermembrane-facing; it reads MGCTGVIGGDLTVGD. Residues 403 to 424 traverse the membrane as a helical segment; the sequence is LVLINQLVFQLSVPLNFLGSVY. Gly421 is a glutathione binding site. Topologically, residues 425–727 are mitochondrial matrix; sequence RELKQSLIDM…ETLEKLNKSI (303 aa). The 237-residue stretch at 465-701 folds into the ABC transporter domain; sequence IKFENVTFGY…ENSLYKELWR (237 aa). Residues Tyr474 and 498–509 contribute to the ATP site; that span reads GPSGSGKSTVLK.

Belongs to the ABC transporter superfamily. ABCB family. Heavy Metal importer (TC 3.A.1.210) subfamily. Homodimer.

It is found in the mitochondrion inner membrane. Functionally, performs an essential function in the generation of cytoplasmic iron-sulfur proteins by mediating the ATP-dependent export of Fe/S cluster precursors synthesized by NFS1 and other mitochondrial proteins. Hydrolyzes ATP. Binds glutathione and may function by transporting a glutathione-conjugated iron-sulfur compound. This is Iron-sulfur clusters transporter ATM1, mitochondrial from Candida glabrata (strain ATCC 2001 / BCRC 20586 / JCM 3761 / NBRC 0622 / NRRL Y-65 / CBS 138) (Yeast).